The primary structure comprises 352 residues: tRNA pseudouridine synthase D (352 aa).

The Nucleophile role is filled by Asp-78. One can recognise a TRUD domain in the interval 153-299 (GVPNYYGEQR…LDQDRRPLLL (147 aa)).

The protein belongs to the pseudouridine synthase TruD family.

It catalyses the reaction uridine(13) in tRNA = pseudouridine(13) in tRNA. Its function is as follows. Responsible for synthesis of pseudouridine from uracil-13 in transfer RNAs. The protein is tRNA pseudouridine synthase D of Aeromonas salmonicida (strain A449).